Consider the following 190-residue polypeptide: Putative manganese efflux pump MntP (190 aa).

Transmembrane regions (helical) follow at residues 3-23 (PASI…AAVG), 39-59 (IGLI…FIGQ), 65-85 (VANW…LHMI), 106-128 (WLLA…GLAF), 133-155 (IWVA…VMLG), and 157-177 (AIGT…LIIV).

The protein belongs to the MntP (TC 9.B.29) family.

It localises to the cell inner membrane. Probably functions as a manganese efflux pump. This chain is Putative manganese efflux pump MntP, found in Pseudomonas fluorescens (strain ATCC BAA-477 / NRRL B-23932 / Pf-5).